The sequence spans 516 residues: GMP synthase [glutamine-hydrolyzing] (516 aa).

The Glutamine amidotransferase type-1 domain maps to 7 to 203; sequence SVIVLDFGSQ…LIDIAGITPD (197 aa). C84 serves as the catalytic Nucleophile. Residues H177 and E179 contribute to the active site. A GMPS ATP-PPase domain is found at 204-391; sequence WSPKSFIQHQ…LGIAEDILMR (188 aa). An ATP-binding site is contributed by 231-237; sequence SGGVDST.

In terms of assembly, homodimer.

It carries out the reaction XMP + L-glutamine + ATP + H2O = GMP + L-glutamate + AMP + diphosphate + 2 H(+). Its pathway is purine metabolism; GMP biosynthesis; GMP from XMP (L-Gln route): step 1/1. Functionally, catalyzes the synthesis of GMP from XMP. In Chlorobaculum tepidum (strain ATCC 49652 / DSM 12025 / NBRC 103806 / TLS) (Chlorobium tepidum), this protein is GMP synthase [glutamine-hydrolyzing].